A 333-amino-acid polypeptide reads, in one-letter code: Fructose-1,6-bisphosphatase class 1 1 (333 aa).

Mg(2+) contacts are provided by E81, D100, L102, and D103. Residues 103–106 and N191 each bind substrate; that span reads DGSS. Position 263 (E263) interacts with Mg(2+).

This sequence belongs to the FBPase class 1 family. As to quaternary structure, homotetramer. It depends on Mg(2+) as a cofactor.

The protein localises to the cytoplasm. It carries out the reaction beta-D-fructose 1,6-bisphosphate + H2O = beta-D-fructose 6-phosphate + phosphate. The protein operates within carbohydrate biosynthesis; Calvin cycle. This chain is Fructose-1,6-bisphosphatase class 1 1, found in Cereibacter sphaeroides (strain ATCC 17025 / ATH 2.4.3) (Rhodobacter sphaeroides).